A 164-amino-acid polypeptide reads, in one-letter code: Nucleotide-binding protein Daro_3028 (164 aa).

The protein belongs to the YajQ family.

In terms of biological role, nucleotide-binding protein. The sequence is that of Nucleotide-binding protein Daro_3028 from Dechloromonas aromatica (strain RCB).